A 260-amino-acid polypeptide reads, in one-letter code: Vesicle-associated membrane protein 7B (260 aa).

At 1 to 189 the chain is on the cytoplasmic side; the sequence is MPIIYSLVAR…KCAMWWKNVK (189 aa). The region spanning 7-110 is the Longin domain; the sequence is LVARGSSVLA…GMNSDFSRTL (104 aa). In terms of domain architecture, v-SNARE coiled-coil homology spans 125–186; sequence TMSRTMAEID…KQLKCAMWWK (62 aa). Residues 190 to 210 traverse the membrane as a helical; Anchor for type IV membrane protein segment; the sequence is LMLVLGAIVLIIIFIIVMSYC. At 211 to 260 the chain is on the vesicular side; that stretch reads DGFRSGSKCRSSPSSNSTPTPTPTETPTPTPTPTSTPTPSQLLETLLNQF. The segment at 215 to 250 is disordered; that stretch reads SGSKCRSSPSSNSTPTPTPTETPTPTPTPTSTPTPS. The span at 230-246 shows a compositional bias: pro residues; that stretch reads TPTPTETPTPTPTPTST.

The protein belongs to the synaptobrevin family.

Its subcellular location is the cytoplasmic vesicle. The protein localises to the secretory vesicle membrane. It localises to the golgi apparatus. The protein resides in the trans-Golgi network membrane. It is found in the late endosome membrane. Its subcellular location is the lysosome membrane. The protein localises to the endoplasmic reticulum membrane. It localises to the phagosome membrane. Involved in the targeting and/or fusion of transport vesicles to their target membrane during transport of proteins from the early endosome to the lysosome. Required for heterotypic fusion of late endosomes with lysosomes and homotypic lysosomal fusion. The polypeptide is Vesicle-associated membrane protein 7B (Dictyostelium discoideum (Social amoeba)).